The primary structure comprises 626 residues: Fructose-1,6-bisphosphatase class 3 (626 aa).

Belongs to the FBPase class 3 family. It depends on Mn(2+) as a cofactor.

The enzyme catalyses beta-D-fructose 1,6-bisphosphate + H2O = beta-D-fructose 6-phosphate + phosphate. Its pathway is carbohydrate biosynthesis; gluconeogenesis. The chain is Fructose-1,6-bisphosphatase class 3 from Enterococcus faecalis (strain ATCC 700802 / V583).